A 494-amino-acid polypeptide reads, in one-letter code: Ammonium transporter Rh type C (494 aa).

The Cytoplasmic portion of the chain corresponds to Met-1–Leu-22. The helical transmembrane segment at Thr-23–Ile-43 threads the bilayer. At Arg-44 to Tyr-74 the chain is on the extracellular side. An N-linked (GlcNAc...) asparagine glycan is attached at Asn-61. Residues Pro-75–Leu-95 traverse the membrane as a helical segment. The Cytoplasmic portion of the chain corresponds to Lys-96–Ser-99. The chain crosses the membrane as a helical span at residues Phe-100–Met-120. The Extracellular segment spans residues Gln-121–Lys-133. The chain crosses the membrane as a helical span at residues Ile-134–Ala-154. Topologically, residues Tyr-155 to Gln-166 are cytoplasmic. Residues Leu-167–Asn-187 form a helical membrane-spanning segment. Residues Leu-188 to Ala-194 lie on the Extracellular side of the membrane. The helical transmembrane segment at Gly-195–Leu-215 threads the bilayer. Topologically, residues Tyr-216–Asp-234 are cytoplasmic. A helical transmembrane segment spans residues Ile-235–Ile-255. Topologically, residues Thr-256–Ala-265 are extracellular. Residues Val-266–Phe-286 traverse the membrane as a helical segment. At Ser-287–His-297 the chain is on the cytoplasmic side. A helical transmembrane segment spans residues Ile-298–Ser-318. Residue Pro-319 is a topological domain, extracellular. The helical transmembrane segment at Tyr-320–Ile-340 threads the bilayer. Topologically, residues Ser-341–Asn-358 are cytoplasmic. The helical transmembrane segment at Leu-359–Ser-379 threads the bilayer. Over Glu-380 to Ala-411 the chain is Extracellular. Residues Ala-412–Leu-432 form a helical membrane-spanning segment. The Cytoplasmic portion of the chain corresponds to Lys-433–Ser-494.

Belongs to the ammonium transporter (TC 2.A.49) family. Rh subfamily. Homotrimer.

It is found in the apical cell membrane. Its function is as follows. Functions as an ammonia transporter. May play a role in the elimination of ammonia in the gill. This chain is Ammonium transporter Rh type C (rhcg), found in Oncorhynchus mykiss (Rainbow trout).